A 309-amino-acid polypeptide reads, in one-letter code: Ribonuclease Z (309 aa).

7 residues coordinate Zn(2+): histidine 63, histidine 65, aspartate 67, histidine 68, histidine 141, aspartate 212, and histidine 270. The Proton acceptor role is filled by aspartate 67.

The protein belongs to the RNase Z family. Homodimer. Zn(2+) is required as a cofactor.

The catalysed reaction is Endonucleolytic cleavage of RNA, removing extra 3' nucleotides from tRNA precursor, generating 3' termini of tRNAs. A 3'-hydroxy group is left at the tRNA terminus and a 5'-phosphoryl group is left at the trailer molecule.. Functionally, zinc phosphodiesterase, which displays some tRNA 3'-processing endonuclease activity. Probably involved in tRNA maturation, by removing a 3'-trailer from precursor tRNA. This is Ribonuclease Z from Halalkalibacterium halodurans (strain ATCC BAA-125 / DSM 18197 / FERM 7344 / JCM 9153 / C-125) (Bacillus halodurans).